Here is a 193-residue protein sequence, read N- to C-terminus: tRNA(Phe) 7-((3-amino-3-carboxypropyl)-4-demethylwyosine(37)-N(4))-methyltransferase (193 aa).

This sequence belongs to the TYW3 family.

The enzyme catalyses 4-demethyl-7-[(3S)-3-amino-3-carboxypropyl]wyosine(37) in tRNA(Phe) + S-adenosyl-L-methionine = 7-[(3S)-3-amino-3-carboxypropyl]wyosine(37) in tRNA(Phe) + S-adenosyl-L-homocysteine + H(+). In terms of biological role, S-adenosyl-L-methionine-dependent methyltransferase that acts as a component of the wyosine derivatives biosynthesis pathway. Probably methylates N-4 position of wybutosine-86 to produce wybutosine-72. In Methanocaldococcus jannaschii (strain ATCC 43067 / DSM 2661 / JAL-1 / JCM 10045 / NBRC 100440) (Methanococcus jannaschii), this protein is tRNA(Phe) 7-((3-amino-3-carboxypropyl)-4-demethylwyosine(37)-N(4))-methyltransferase.